The following is a 146-amino-acid chain: MSTTTEILAHHWAFALFLIIAIGLCVFMLTGGFLLGGRAKGRAKNVPYESGIDSVGSARLRLSAKFYLVAMFFVIFDVEALYLYAWAVSIKESGWIGFIEATIFILVLLAGLIYLVRVGALDWTPVRSKRQVVKSDIINTTNTHPQ.

The next 3 membrane-spanning stretches (helical) occupy residues 14–34 (FALFLIIAIGLCVFMLTGGFL), 68–88 (LVAMFFVIFDVEALYLYAWAV), and 96–116 (IGFIEATIFILVLLAGLIYLV).

Belongs to the complex I subunit 3 family. In terms of assembly, NDH-1 is composed of 13 different subunits. Subunits NuoA, H, J, K, L, M, N constitute the membrane sector of the complex.

Its subcellular location is the cell inner membrane. It catalyses the reaction a quinone + NADH + 5 H(+)(in) = a quinol + NAD(+) + 4 H(+)(out). NDH-1 shuttles electrons from NADH, via FMN and iron-sulfur (Fe-S) centers, to quinones in the respiratory chain. The immediate electron acceptor for the enzyme in this species is believed to be ubiquinone. Couples the redox reaction to proton translocation (for every two electrons transferred, four hydrogen ions are translocated across the cytoplasmic membrane), and thus conserves the redox energy in a proton gradient. The polypeptide is NADH-quinone oxidoreductase subunit A (Pectobacterium atrosepticum (strain SCRI 1043 / ATCC BAA-672) (Erwinia carotovora subsp. atroseptica)).